The primary structure comprises 366 residues: Chorismate synthase (366 aa).

Arg-48 is a binding site for NADP(+). FMN contacts are provided by residues 125–127, 241–242, Gly-285, 300–304, and Arg-326; these read RSS, NA, and KPTSS.

This sequence belongs to the chorismate synthase family. In terms of assembly, homotetramer. Requires FMNH2 as cofactor.

It catalyses the reaction 5-O-(1-carboxyvinyl)-3-phosphoshikimate = chorismate + phosphate. It participates in metabolic intermediate biosynthesis; chorismate biosynthesis; chorismate from D-erythrose 4-phosphate and phosphoenolpyruvate: step 7/7. Its function is as follows. Catalyzes the anti-1,4-elimination of the C-3 phosphate and the C-6 proR hydrogen from 5-enolpyruvylshikimate-3-phosphate (EPSP) to yield chorismate, which is the branch point compound that serves as the starting substrate for the three terminal pathways of aromatic amino acid biosynthesis. This reaction introduces a second double bond into the aromatic ring system. This Ruegeria pomeroyi (strain ATCC 700808 / DSM 15171 / DSS-3) (Silicibacter pomeroyi) protein is Chorismate synthase.